The sequence spans 932 residues: DNA mismatch repair protein MutS (932 aa).

620-627 is an ATP binding site; sequence GPNMAGKS.

It belongs to the DNA mismatch repair MutS family.

This protein is involved in the repair of mismatches in DNA. It is possible that it carries out the mismatch recognition step. This protein has a weak ATPase activity. The protein is DNA mismatch repair protein MutS of Lachnoclostridium phytofermentans (strain ATCC 700394 / DSM 18823 / ISDg) (Clostridium phytofermentans).